The chain runs to 147 residues: MPGKKSPYGLFAGGKLKRKRKRFKWNDITYKRKMLGLVEKYDPLEGAPMARGIVLEKVGVEARKPNAAVRKCVRVQLVKNGKVVTAFVPLDGSLNYINEHDEVIIERIGGPEGRSLGDIPGVRFKVIKVNGVSLWAIWRGKKQKPTR.

This sequence belongs to the universal ribosomal protein uS12 family. In terms of assembly, part of the 30S ribosomal subunit.

With S4 and S5 plays an important role in translational accuracy. Located at the interface of the 30S and 50S subunits. This is Small ribosomal subunit protein uS12 from Pyrobaculum islandicum (strain DSM 4184 / JCM 9189 / GEO3).